A 122-amino-acid chain; its full sequence is UPF0102 protein XOO3839 (122 aa).

The protein belongs to the UPF0102 family.

This chain is UPF0102 protein XOO3839, found in Xanthomonas oryzae pv. oryzae (strain KACC10331 / KXO85).